A 209-amino-acid polypeptide reads, in one-letter code: Orotate phosphoribosyltransferase (209 aa).

5-phospho-alpha-D-ribose 1-diphosphate contacts are provided by residues Arg96, Lys100, His102, and 122–130 (EDLISTGGS). Ser126 lines the orotate pocket.

This sequence belongs to the purine/pyrimidine phosphoribosyltransferase family. PyrE subfamily. Homodimer. Requires Mg(2+) as cofactor.

It catalyses the reaction orotidine 5'-phosphate + diphosphate = orotate + 5-phospho-alpha-D-ribose 1-diphosphate. The protein operates within pyrimidine metabolism; UMP biosynthesis via de novo pathway; UMP from orotate: step 1/2. Its function is as follows. Catalyzes the transfer of a ribosyl phosphate group from 5-phosphoribose 1-diphosphate to orotate, leading to the formation of orotidine monophosphate (OMP). In Listeria monocytogenes serotype 4b (strain F2365), this protein is Orotate phosphoribosyltransferase.